Consider the following 738-residue polypeptide: Eukaryotic translation initiation factor 3 subunit B (738 aa).

Residues 1–120 (MCGCVGVISN…LFIQFKTAQM (120 aa)) are sufficient for interaction with HCR1 and TIF32. Positions 1-245 (MCGCVGVISN…GIQSWGGAQF (245 aa)) are sufficient for interaction with PIC8. Residues 59–146 (NFVVVDGAPI…HRLLVNKLSD (88 aa)) form the RRM domain. 4 WD repeats span residues 211–250 (PRKGFTSKYAKFSPKGTYLFSIHPQGIQSWGGAQFESISK), 322–360 (QKEMPWPLVKWSHDDKYCARQGPGALAIYETPSFQLLDK), 363–406 (VKID…QTAR), and 537–579 (VVDK…ENVR).

The protein belongs to the eIF-3 subunit B family. As to quaternary structure, component of the eukaryotic translation initiation factor 3 (eIF-3) complex.

The protein resides in the cytoplasm. In terms of biological role, RNA-binding component of the eukaryotic translation initiation factor 3 (eIF-3) complex, which is involved in protein synthesis of a specialized repertoire of mRNAs and, together with other initiation factors, stimulates binding of mRNA and methionyl-tRNAi to the 40S ribosome. The eIF-3 complex specifically targets and initiates translation of a subset of mRNAs involved in cell proliferation. The sequence is that of Eukaryotic translation initiation factor 3 subunit B from Meyerozyma guilliermondii (strain ATCC 6260 / CBS 566 / DSM 6381 / JCM 1539 / NBRC 10279 / NRRL Y-324) (Yeast).